The sequence spans 299 residues: Circadian clock oscillator protein KaiA (299 aa).

The interval 1-135 (MQSPLSLCLF…LHLGPICTLP (135 aa)) is psR domain, binds oxidized quinones. The region spanning 1–169 (MQSPLSLCLF…RLADKLKERL (169 aa)) is the KaiA N-terminal domain. The tract at residues 170-178 (GYLGVYYKR) is flexible linker. Residues 179–287 (KPSHFYRNFS…GEMYRRSIPR (109 aa)) enclose the KaiA C-terminal domain.

The protein belongs to the KaiA family. Homodimer. The KaiABC1 complex composition changes during the circadian cycle to control KaiC1 phosphorylation. Complexes KaiC1(6), KaiA(2-4):KaiC1(6), KaiB(6):KaiC1(6) and KaiC1(6):KaiB(6):KaiA(12) are among the most important forms, many form cooperatively. KaiA and CikA bind to the same region of the KaiB(fs) form and therefore compete. Interacts with KaiC1 but not KaiC2 or KaiC3. Interacts with itself, not seen to interact with other Kai proteins.

Functionally, key component of the KaiABC oscillator complex, which constitutes the main circadian regulator in cyanobacteria. Complex composition changes during the circadian cycle to control KaiC phosphorylation. KaiA stimulates KaiC autophosphorylation, while KaiB sequesters KaiA, leading to KaiC autodephosphorylation. KaiA binding to the KaiC CII domain during the subjective day yields KaiA(2-4):KaiC(6) complexes which stimulate KaiC autophosphorylation. Phospho-Ser-431 KaiC accumulation triggers binding of KaiB during the subjective night to form the KaiB(6):KaiC(6) complex, leading to changes in the output regulators CikA and SasA. KaiB(6):KaiC(6) formation exposes a site for KaiA binding on KaiB that sequesters KaiA from KaiC's CII domain, making the KaiC(6):KaiB(6):KaiA(12) complex resulting in KaiC autodephosphorylation. Complete dephosphorylation of KaiC leads to dissociation of KaiA(2):KaiB(1), completing 1 cycle of the Kai oscillator. Its function is as follows. Component of the oscillator and circadian clock in this organism, enhances fitness in a rhythmic environment. Stimulates KaiC1 to autophosphorylate, has no effect on the kinase activity of KaiC2 or KaiC3. In terms of biological role, binds oxidized quinones via the N-terminal PsR domain, allowing it to sense redox changes and possibly mediate clock input. This chain is Circadian clock oscillator protein KaiA, found in Synechocystis sp. (strain ATCC 27184 / PCC 6803 / Kazusa).